The following is a 320-amino-acid chain: Phospho-N-acetylmuramoyl-pentapeptide-transferase (320 aa).

A run of 9 helical transmembrane segments spans residues L5–F25, M51–Y71, G76–I96, V124–I144, G145–S165, G176–M196, N198–F218, L233–F255, and W298–Y318.

Belongs to the glycosyltransferase 4 family. MraY subfamily. Mg(2+) serves as cofactor.

The protein resides in the cell membrane. The enzyme catalyses UDP-N-acetyl-alpha-D-muramoyl-L-alanyl-gamma-D-glutamyl-L-lysyl-D-alanyl-D-alanine + di-trans,octa-cis-undecaprenyl phosphate = Mur2Ac(oyl-L-Ala-gamma-D-Glu-L-Lys-D-Ala-D-Ala)-di-trans,octa-cis-undecaprenyl diphosphate + UMP. It functions in the pathway cell wall biogenesis; peptidoglycan biosynthesis. Its function is as follows. Catalyzes the initial step of the lipid cycle reactions in the biosynthesis of the cell wall peptidoglycan: transfers peptidoglycan precursor phospho-MurNAc-pentapeptide from UDP-MurNAc-pentapeptide onto the lipid carrier undecaprenyl phosphate, yielding undecaprenyl-pyrophosphoryl-MurNAc-pentapeptide, known as lipid I. The chain is Phospho-N-acetylmuramoyl-pentapeptide-transferase from Leuconostoc citreum (strain KM20).